Here is a 75-residue protein sequence, read N- to C-terminus: Endogenous retrovirus group K member 24 Np9 protein (75 aa).

Residues 22-43 (TAPKRQRPSRTGHDDDGGFVEK) are disordered. The span at 32–43 (TGHDDDGGFVEK) shows a compositional bias: basic and acidic residues.

Transcript detectable in many tumor cell lines and tumor tissues.

The protein resides in the nucleus. May possess a function in tumorigenesis. The chain is Endogenous retrovirus group K member 24 Np9 protein (ERVK-24) from Homo sapiens (Human).